Reading from the N-terminus, the 197-residue chain is Protein GrpE (197 aa).

The segment at 1–39 (MSSKEQKTPEGQAPEEIIMDQHEEIEAVEPEASAEQVDP) is disordered.

It belongs to the GrpE family. In terms of assembly, homodimer.

The protein localises to the cytoplasm. In terms of biological role, participates actively in the response to hyperosmotic and heat shock by preventing the aggregation of stress-denatured proteins, in association with DnaK and GrpE. It is the nucleotide exchange factor for DnaK and may function as a thermosensor. Unfolded proteins bind initially to DnaJ; upon interaction with the DnaJ-bound protein, DnaK hydrolyzes its bound ATP, resulting in the formation of a stable complex. GrpE releases ADP from DnaK; ATP binding to DnaK triggers the release of the substrate protein, thus completing the reaction cycle. Several rounds of ATP-dependent interactions between DnaJ, DnaK and GrpE are required for fully efficient folding. This Escherichia coli O127:H6 (strain E2348/69 / EPEC) protein is Protein GrpE.